Consider the following 371-residue polypeptide: tRNA-specific 2-thiouridylase MnmA (371 aa).

ATP contacts are provided by residues 12 to 19 (GMSGGVDS) and Met-38. The segment at 98–100 (NPD) is interaction with target base in tRNA. Residue Cys-103 is the Nucleophile of the active site. Residues Cys-103 and Cys-200 are joined by a disulfide bond. Residue Gly-127 coordinates ATP. An interaction with tRNA region spans residues 150-152 (KDQ). The active-site Cysteine persulfide intermediate is the Cys-200. An interaction with tRNA region spans residues 308–309 (RY).

Belongs to the MnmA/TRMU family.

It localises to the cytoplasm. It carries out the reaction S-sulfanyl-L-cysteinyl-[protein] + uridine(34) in tRNA + AH2 + ATP = 2-thiouridine(34) in tRNA + L-cysteinyl-[protein] + A + AMP + diphosphate + H(+). Catalyzes the 2-thiolation of uridine at the wobble position (U34) of tRNA, leading to the formation of s(2)U34. The polypeptide is tRNA-specific 2-thiouridylase MnmA (Oceanobacillus iheyensis (strain DSM 14371 / CIP 107618 / JCM 11309 / KCTC 3954 / HTE831)).